The chain runs to 161 residues: Glycine/sarcosine/betaine reductase complex component A2 (161 aa).

Sec42 is an active-site residue. Residue Sec42 is a non-standard amino acid, selenocysteine.

This sequence belongs to the GrdA family. Monomer. Component of the glycine, sarcosine and betaine reductase complexes, together with components B and C.

It catalyses the reaction acetyl phosphate + [thioredoxin]-disulfide + NH4(+) + H2O = [thioredoxin]-dithiol + glycine + phosphate + H(+). It carries out the reaction acetyl phosphate + methylamine + [thioredoxin]-disulfide + H2O = sarcosine + [thioredoxin]-dithiol + phosphate + H(+). The enzyme catalyses acetyl phosphate + trimethylamine + [thioredoxin]-disulfide + H2O = glycine betaine + [thioredoxin]-dithiol + phosphate + H(+). In terms of biological role, in the first step of glycine, betaine and sarcosine reductases, the substrate is bound to component PB via a Schiff base intermediate. Then the PB-activated substrate is nucleophilically attacked by the selenol anion of component PA to transform it to a carboxymethylated selenoether and the respective amine. By action of component PC, acetyl phosphate is formed, leaving component PA in its oxidized state. Finally component PA becomes reduced by the thioredoxin system to start a new catalytic cycle of reductive deamination. The sequence is that of Glycine/sarcosine/betaine reductase complex component A2 (grdA2) from Photobacterium profundum (strain SS9).